The chain runs to 386 residues: DNase toxin Tse7 (386 aa).

As to quaternary structure, interacts with Tsi7.

The catalysed reaction is Endonucleolytic cleavage to 5'-phosphodinucleotide and 5'-phosphooligonucleotide end-products.. Functionally, type VI secretion exported toxin that via to its DNase activity induces growth arrest and ultimately DNA degradation within target cell. The activity is initially neutralized by a cognate immunity protein Tsi7. This Pseudomonas aeruginosa (strain ATCC 15692 / DSM 22644 / CIP 104116 / JCM 14847 / LMG 12228 / 1C / PRS 101 / PAO1) protein is DNase toxin Tse7.